A 241-amino-acid chain; its full sequence is Large ribosomal subunit protein uL3 (241 aa).

It belongs to the universal ribosomal protein uL3 family. In terms of assembly, part of the 50S ribosomal subunit. Forms a cluster with proteins L14 and L19.

One of the primary rRNA binding proteins, it binds directly near the 3'-end of the 23S rRNA, where it nucleates assembly of the 50S subunit. The polypeptide is Large ribosomal subunit protein uL3 (Aquifex aeolicus (strain VF5)).